The following is a 158-amino-acid chain: UPF0311 protein CA_C3321 (158 aa).

Belongs to the UPF0311 family.

In Clostridium acetobutylicum (strain ATCC 824 / DSM 792 / JCM 1419 / IAM 19013 / LMG 5710 / NBRC 13948 / NRRL B-527 / VKM B-1787 / 2291 / W), this protein is UPF0311 protein CA_C3321.